Reading from the N-terminus, the 66-residue chain is Large ribosomal subunit protein uL29 (66 aa).

This sequence belongs to the universal ribosomal protein uL29 family.

This Borrelia hermsii (strain HS1 / DAH) protein is Large ribosomal subunit protein uL29.